The primary structure comprises 327 residues: Deoxyribonuclease (327 aa).

The segment at residues 1-24 is a signal peptide (or 35); that stretch reads MSKKLRNFLVRIIVAAFASFAVMA. Residues 299–327 are disordered; that stretch reads DSTTDEIENSVDDSEEIVYNDTTTEEEEN.

The enzyme catalyses Endonucleolytic cleavage to 5'-phosphodinucleotide and 5'-phosphooligonucleotide end-products.. In terms of biological role, may have a role in S.equisimilis virulence. This Streptococcus dysgalactiae subsp. equisimilis (Streptococcus equisimilis) protein is Deoxyribonuclease (sdc).